The primary structure comprises 227 residues: Adenosylcobinamide-GDP ribazoletransferase (227 aa).

5 helical membrane passes run 3–23, 26–46, 95–115, 117–137, and 165–185; these read CLKA…ELDF, IWAT…AVYF, GVGG…ARPE, WLDY…VAAY, and AVAA…SLFF.

It belongs to the CobS family. The cofactor is Mg(2+).

The protein localises to the cell membrane. It catalyses the reaction alpha-ribazole + adenosylcob(III)inamide-GDP = adenosylcob(III)alamin + GMP + H(+). It carries out the reaction alpha-ribazole 5'-phosphate + adenosylcob(III)inamide-GDP = adenosylcob(III)alamin 5'-phosphate + GMP + H(+). It functions in the pathway cofactor biosynthesis; adenosylcobalamin biosynthesis; adenosylcobalamin from cob(II)yrinate a,c-diamide: step 7/7. Joins adenosylcobinamide-GDP and alpha-ribazole to generate adenosylcobalamin (Ado-cobalamin). Also synthesizes adenosylcobalamin 5'-phosphate from adenosylcobinamide-GDP and alpha-ribazole 5'-phosphate. This chain is Adenosylcobinamide-GDP ribazoletransferase, found in Pyrobaculum islandicum (strain DSM 4184 / JCM 9189 / GEO3).